The following is a 234-amino-acid chain: Adenosine 5'-phosphosulfate reductase (234 aa).

Positions 120, 121, 203, and 206 each coordinate [4Fe-4S] cluster. The Nucleophile; cysteine thiosulfonate intermediate role is filled by Cys-229.

It belongs to the PAPS reductase family. CysH subfamily. It depends on [4Fe-4S] cluster as a cofactor.

It is found in the cytoplasm. The enzyme catalyses [thioredoxin]-disulfide + sulfite + AMP + 2 H(+) = adenosine 5'-phosphosulfate + [thioredoxin]-dithiol. It functions in the pathway sulfur metabolism; hydrogen sulfide biosynthesis; sulfite from sulfate. Catalyzes the formation of sulfite from adenosine 5'-phosphosulfate (APS) using thioredoxin as an electron donor. In Bacillus cereus (strain ZK / E33L), this protein is Adenosine 5'-phosphosulfate reductase.